We begin with the raw amino-acid sequence, 96 residues long: Protein transport protein Sec61 subunit beta (96 aa).

The segment covering M1–S17 has biased composition (polar residues). The tract at residues M1 to G54 is disordered. P2 is subject to N-acetylproline. The Cytoplasmic portion of the chain corresponds to P2–P70. At S7 the chain carries Phosphoserine. Phosphothreonine is present on T9. Phosphoserine is present on residues S13, S14, and S17. A lipid anchor (S-palmitoyl cysteine) is attached at C39. The span at G40–A50 shows a compositional bias: low complexity. A helical membrane pass occupies residues V71 to G91.

Belongs to the SEC61-beta family. As to quaternary structure, the SEC61 channel-forming translocon complex consists of channel-forming core components SEC61A1, SEC61B and SEC61G and different auxiliary components such as SEC62 and SEC63. The SEC61 channel associates with the multi-pass translocon (MPT) complex. Interacts with TRAM1.

The protein resides in the endoplasmic reticulum membrane. In terms of biological role, component of SEC61 channel-forming translocon complex that mediates transport of signal peptide-containing precursor polypeptides across the endoplasmic reticulum (ER). Forms a ribosome receptor and a gated pore in the ER membrane, both functions required for cotranslational translocation of nascent polypeptides. The SEC61 channel is also involved in ER membrane insertion of transmembrane proteins: it mediates membrane insertion of the first few transmembrane segments of proteins, while insertion of subsequent transmembrane regions of multi-pass membrane proteins is mediated by the multi-pass translocon (MPT) complex. The SEC61 channel cooperates with the translocating protein TRAM1 to import nascent proteins into the ER. Required for PKD1/Polycystin-1 biogenesis. The protein is Protein transport protein Sec61 subunit beta of Mus musculus (Mouse).